The sequence spans 128 residues: Large ribosomal subunit protein uL22 (128 aa).

The protein belongs to the universal ribosomal protein uL22 family. Part of the 50S ribosomal subunit.

In terms of biological role, this protein binds specifically to 23S rRNA; its binding is stimulated by other ribosomal proteins, e.g. L4, L17, and L20. It is important during the early stages of 50S assembly. It makes multiple contacts with different domains of the 23S rRNA in the assembled 50S subunit and ribosome. The globular domain of the protein is located near the polypeptide exit tunnel on the outside of the subunit, while an extended beta-hairpin is found that lines the wall of the exit tunnel in the center of the 70S ribosome. This chain is Large ribosomal subunit protein uL22, found in Prochlorococcus marinus (strain MIT 9515).